Here is a 449-residue protein sequence, read N- to C-terminus: Methionine aminopeptidase 2-2 (449 aa).

Residues 1–91 are disordered; sequence MAAQAAPELA…PRIPLTTLFP (91 aa). The span at 15–28 shows a compositional bias: polar residues; that stretch reads NKNTGSAEASTVPA. Acidic residues predominate over residues 34–50; sequence DDAENEGDSDDDRDDEQ. A compositionally biased stretch (basic residues) spans 61 to 75; the sequence is KKKKKKRPKKKKKTA. H199 lines the substrate pocket. A divalent metal cation contacts are provided by D219, D230, and H299. H307 is a binding site for substrate. E335 and E430 together coordinate a divalent metal cation.

This sequence belongs to the peptidase M24A family. Methionine aminopeptidase eukaryotic type 2 subfamily. The cofactor is Co(2+). Zn(2+) serves as cofactor. It depends on Mn(2+) as a cofactor. Fe(2+) is required as a cofactor.

Its subcellular location is the cytoplasm. The enzyme catalyses Release of N-terminal amino acids, preferentially methionine, from peptides and arylamides.. Its function is as follows. Cotranslationally removes the N-terminal methionine from nascent proteins. The N-terminal methionine is often cleaved when the second residue in the primary sequence is small and uncharged (Met-Ala-, Cys, Gly, Pro, Ser, Thr, or Val). The polypeptide is Methionine aminopeptidase 2-2 (Arthroderma gypseum (strain ATCC MYA-4604 / CBS 118893) (Microsporum gypseum)).